Here is a 170-residue protein sequence, read N- to C-terminus: Putative invertase inhibitor (170 aa).

The N-terminal stretch at 1–14 (MKLSFSLCIFFLIS) is a signal peptide. Cystine bridges form between Cys-22/Cys-37 and Cys-93/Cys-133.

It belongs to the PMEI family. Expressed in pollen (at protein level). Expressed in pollen.

The sequence is that of Putative invertase inhibitor from Platanus orientalis (Oriental plane-tree).